We begin with the raw amino-acid sequence, 1203 residues long: Metabotropic glutamate receptor 5 (1203 aa).

An N-terminal signal peptide occupies residues 1 to 20; the sequence is MVLLLILSVLLLKEDVRGSA. The Extracellular segment spans residues 21–579; that stretch reads QSSERRVVAH…QYLRWGDPEP (559 aa). A disulfide bond links cysteine 57 and cysteine 99. Tyrosine 64 serves as a coordination point for L-glutamate. The N-linked (GlcNAc...) asparagine glycan is linked to asparagine 88. L-glutamate-binding positions include serine 151 and 172 to 174; that span reads SAT. An N-linked (GlcNAc...) asparagine glycan is attached at asparagine 209. Tyrosine 222 contributes to the L-glutamate binding site. Disulfide bonds link cysteine 240/cysteine 529, cysteine 275/cysteine 277, cysteine 364/cysteine 380, cysteine 418/cysteine 425, cysteine 510/cysteine 530, cysteine 514/cysteine 533, cysteine 536/cysteine 548, and cysteine 551/cysteine 564. Aspartate 304 serves as a coordination point for L-glutamate. Asparagine 377 and asparagine 381 each carry an N-linked (GlcNAc...) asparagine glycan. L-glutamate is bound at residue lysine 395. An N-linked (GlcNAc...) asparagine glycan is attached at asparagine 444. A helical transmembrane segment spans residues 580-602; the sequence is IAAVVFACLGLLATLFVTVIFII. Residues 603–612 lie on the Cytoplasmic side of the membrane; the sequence is YRDTPVVKSS. The chain crosses the membrane as a helical span at residues 613–635; sequence SRELCYIILAGICLGYLCTFCLI. Topologically, residues 636–643 are extracellular; sequence AKPKQIYC. A disulfide bridge links cysteine 643 with cysteine 732. The chain crosses the membrane as a helical span at residues 644–666; the sequence is YLQRIGIGLSPAMSYSALVTKTN. The Cytoplasmic portion of the chain corresponds to 667 to 692; it reads RIARILAGSKKKICTKKPRFMSACAQ. A helical membrane pass occupies residues 693 to 713; it reads LVIAFILICIQLGIIVALFIM. The Extracellular segment spans residues 714–736; it reads EPPDIMHDYPSIREVYLICNTTN. The N-linked (GlcNAc...) asparagine glycan is linked to asparagine 733. A helical transmembrane segment spans residues 737–758; the sequence is LGVVTPLGYNGLLILSCTFYAF. The Cytoplasmic segment spans residues 759–771; that stretch reads KTRNVPANFNEAK. The chain crosses the membrane as a helical span at residues 772 to 794; it reads YIAFTMYTTCIIWLAFVPIYFGS. Over 795 to 797 the chain is Extracellular; the sequence is NYK. Residues 798-819 form a helical membrane-spanning segment; the sequence is IITMCFSVSLSATVALGCMFVP. The Cytoplasmic segment spans residues 820–1203; that stretch reads KVYIILAKPE…RDYTQSSSSL (384 aa). Serine 860 carries the phosphoserine modification. At arginine 868 the chain carries Omega-N-methylarginine. Disordered stretches follow at residues 892 to 970, 1003 to 1054, and 1122 to 1182; these read FTPK…GSGP, EESF…GSLM, and GAQG…ALCI. Residues 905–920 are compositionally biased toward polar residues; sequence TMSSSNGKSVTWAQNE. Residue arginine 924 is modified to Omega-N-methylarginine. A compositionally biased stretch (low complexity) spans 1007 to 1017; the sequence is PAAARPRSPSP. A phosphoserine mark is found at serine 1014 and serine 1016. 2 stretches are compositionally biased toward polar residues: residues 1039 to 1054 and 1165 to 1176; these read HSETAARSSSSQGSLM and DSGSTTPNSPVS.

The protein belongs to the G-protein coupled receptor 3 family. In terms of assembly, interacts with RYR1, RYR2, ITPR1, SHANK1 and SHANK3. The PPXXF motif binds HOMER1, HOMER2 and HOMER3. Interacts with SIAH1 and TAMALIN. Interacts with NCDN. Interacts with NECAB2. Interacts with CAMK2A. Widely distributed in neuronal cells of the central nervous system.

The protein localises to the cell membrane. In terms of biological role, G-protein coupled receptor for glutamate. Ligand binding causes a conformation change that triggers signaling via guanine nucleotide-binding proteins (G proteins) and modulates the activity of down-stream effectors. Signaling activates a phosphatidylinositol-calcium second messenger system and generates a calcium-activated chloride current. Plays an important role in the regulation of synaptic plasticity and the modulation of the neural network activity. In Rattus norvegicus (Rat), this protein is Metabotropic glutamate receptor 5 (Grm5).